The following is a 473-amino-acid chain: Glutamate--tRNA ligase (473 aa).

The short motif at 9–19 (PSPTGELHLGS) is the 'HIGH' region element. The short motif at 237-241 (KLSKK) is the 'KMSKS' region element. An ATP-binding site is contributed by Lys240.

The protein belongs to the class-I aminoacyl-tRNA synthetase family. Glutamate--tRNA ligase type 1 subfamily. In terms of assembly, monomer.

Its subcellular location is the cytoplasm. The catalysed reaction is tRNA(Glu) + L-glutamate + ATP = L-glutamyl-tRNA(Glu) + AMP + diphosphate. In terms of biological role, catalyzes the attachment of glutamate to tRNA(Glu) in a two-step reaction: glutamate is first activated by ATP to form Glu-AMP and then transferred to the acceptor end of tRNA(Glu). This chain is Glutamate--tRNA ligase, found in Wigglesworthia glossinidia brevipalpis.